The sequence spans 889 residues: Phosphofurin acidic cluster sorting protein 2 (889 aa).

3 disordered regions span residues 180–246, 293–463, and 687–740; these read DHED…TSMT, LDME…PDAR, and SSAT…SQGV. The span at 343 to 358 shows a compositional bias: basic and acidic residues; the sequence is SHKEPPSPADVPEKTR. Phosphoserine is present on residues S390, S416, S453, S691, and S694. Low complexity-rich tracts occupy residues 687-720 and 727-737; these read SSAT…KEAS and PSVSGGLSSPS.

The protein belongs to the PACS family. In terms of assembly, interacts with BID and PKD2. Interacts with SIRT1. Interacts with HDAC1. Interacts with TRPV1. Interacts with WDR37. (Microbial infection) Interacts with HIV-1 Nef. As to expression, broadly expressed, with greatest levels in skeletal muscle followed by heart, brain, pancreas and testis.

It localises to the endoplasmic reticulum. Its subcellular location is the mitochondrion. Functionally, multifunctional sorting protein that controls the endoplasmic reticulum (ER)-mitochondria communication, including the apposition of mitochondria with the ER and ER homeostasis. In addition, in response to apoptotic inducer, translocates BIB to mitochondria, which initiates a sequence of events including the formation of mitochondrial truncated BID, the release of cytochrome c, the activation of caspase-3 thereby causing cell death. May also be involved in ion channel trafficking, directing acidic cluster-containing ion channels to distinct subcellular compartments. This chain is Phosphofurin acidic cluster sorting protein 2, found in Homo sapiens (Human).